The chain runs to 95 residues: Small ribosomal subunit protein bS6 (95 aa).

Belongs to the bacterial ribosomal protein bS6 family.

Binds together with bS18 to 16S ribosomal RNA. The polypeptide is Small ribosomal subunit protein bS6 (Clostridium perfringens (strain ATCC 13124 / DSM 756 / JCM 1290 / NCIMB 6125 / NCTC 8237 / Type A)).